The following is a 356-amino-acid chain: Tyrosine recombinase XerS (356 aa).

Residues 16-121 form the Core-binding (CB) domain; sequence LMPWYVLEYY…ALSSLYKYLT (106 aa). The Tyr recombinase domain maps to 169–354; that stretch reads GFLTYIDQEH…VSDEQKNALD (186 aa). Residues Arg210, Lys234, His306, Arg309, and His332 contribute to the active site. Tyr341 (O-(3'-phospho-DNA)-tyrosine intermediate) is an active-site residue.

The protein belongs to the 'phage' integrase family. XerS subfamily.

The protein resides in the cytoplasm. Its activity is regulated as follows. FtsK is required for recombination. In terms of biological role, site-specific tyrosine recombinase, which acts by catalyzing the cutting and rejoining of the recombining DNA molecules. Essential to convert dimers of the bacterial chromosome into monomers to permit their segregation at cell division. The protein is Tyrosine recombinase XerS of Streptococcus pneumoniae (strain 70585).